The chain runs to 799 residues: Cadherin-8 (799 aa).

The first 29 residues, methionine 1–threonine 29, serve as a signal peptide directing secretion. Positions alanine 30 to arginine 61 are excised as a propeptide. Cadherin domains are found at residues glycine 62–phenylalanine 167, leucine 168–phenylalanine 276, alanine 277–phenylalanine 391, serine 392–proline 494, and glutamate 495–proline 616. Residues glycine 62–methionine 621 are Extracellular-facing. N-linked (GlcNAc...) asparagine glycosylation is present at asparagine 188. 3 N-linked (GlcNAc...) asparagine glycosylation sites follow: asparagine 463, asparagine 473, and asparagine 544. Residues glycine 622–valine 642 traverse the membrane as a helical segment. Over threonine 643–threonine 799 the chain is Cytoplasmic. Serine 795 carries the phosphoserine modification.

The protein localises to the cell membrane. Cadherins are calcium-dependent cell adhesion proteins. They preferentially interact with themselves in a homophilic manner in connecting cells; cadherins may thus contribute to the sorting of heterogeneous cell types. This is Cadherin-8 (Cdh8) from Mus musculus (Mouse).